A 614-amino-acid chain; its full sequence is MCGIVGYIGKRKAYPILIKGLKRLEYRGYDSAGVALISDNQQLNVYKTKGKVSELENFVTQKDISGTVGIAHTRWATHGEPCSVNAHPHYSSSEKLALIHNGIIENYAVLKEKLQAKGYVFKSSTDTEVLVQLIEYMKVTNRVDLLTAVQLALNEVIGAYAIAILDKEHPEEIIAARKSSPLVVGIGEDEFFLASDATPIVEYTDKVVYLEDGEIAVINRGKELKVVDLSNVEMTPEVKKVELKLGQLEKGGYPHFMLKEIFEQPDCIHDCMRGRINVEANNVVLSAVIDYKEKLLNAKRFIIVACGTSWHAGLIGKHLIESFCRIPVEVEYASEFRYRDPVIDEHDVVIAISQSGETADTLAAVELAKSRGAFIYGICNAIGSSIPRATHTGSYIHVGPEIGVASTKAFTGQVTVLTMLALTLAREKGTIDETQYLNIVRELNSIPGKMKEVLKLNDKLAELSKTFTYAHNFIYLGRGYSYPVALEGALKLKEISYIHAEGYPAAEMKHGPIALIDAEMPVVVIATQNGLYEKVLSNIQEIKARKGKVIAFVTKGDTVISKIADCSIELPETIECLDPLITTVPLQLLAYHIAVCKGMDVDQPRNLAKSVTVE.

Catalysis depends on Cys-2, which acts as the Nucleophile; for GATase activity. Residues 2–221 enclose the Glutamine amidotransferase type-2 domain; that stretch reads CGIVGYIGKR…DGEIAVINRG (220 aa). 2 consecutive SIS domains span residues 291–430 and 463–604; these read YKEK…EKGT and LSKT…VDQP. Lys-609 serves as the catalytic For Fru-6P isomerization activity.

As to quaternary structure, homodimer.

Its subcellular location is the cytoplasm. The catalysed reaction is D-fructose 6-phosphate + L-glutamine = D-glucosamine 6-phosphate + L-glutamate. Its function is as follows. Catalyzes the first step in hexosamine metabolism, converting fructose-6P into glucosamine-6P using glutamine as a nitrogen source. This chain is Glutamine--fructose-6-phosphate aminotransferase [isomerizing], found in Bacteroides thetaiotaomicron (strain ATCC 29148 / DSM 2079 / JCM 5827 / CCUG 10774 / NCTC 10582 / VPI-5482 / E50).